The chain runs to 194 residues: Holliday junction branch migration complex subunit RuvA (194 aa).

Positions 1 to 64 (MISSLNGILE…EDALSLFGFA (64 aa)) are domain I. The segment at 65 to 143 (TTEELSLFET…KNWEAGVLSQ (79 aa)) is domain II. A flexible linker region spans residues 144–149 (VTEANS). Positions 149 to 194 (SDILATLTALGYSSSEAAKAISSLGDNGDLPLEERIKLALNYFNNK) are domain III.

This sequence belongs to the RuvA family. In terms of assembly, homotetramer. Forms an RuvA(8)-RuvB(12)-Holliday junction (HJ) complex. HJ DNA is sandwiched between 2 RuvA tetramers; dsDNA enters through RuvA and exits via RuvB. An RuvB hexamer assembles on each DNA strand where it exits the tetramer. Each RuvB hexamer is contacted by two RuvA subunits (via domain III) on 2 adjacent RuvB subunits; this complex drives branch migration. In the full resolvosome a probable DNA-RuvA(4)-RuvB(12)-RuvC(2) complex forms which resolves the HJ.

The protein localises to the cytoplasm. In terms of biological role, the RuvA-RuvB-RuvC complex processes Holliday junction (HJ) DNA during genetic recombination and DNA repair, while the RuvA-RuvB complex plays an important role in the rescue of blocked DNA replication forks via replication fork reversal (RFR). RuvA specifically binds to HJ cruciform DNA, conferring on it an open structure. The RuvB hexamer acts as an ATP-dependent pump, pulling dsDNA into and through the RuvAB complex. HJ branch migration allows RuvC to scan DNA until it finds its consensus sequence, where it cleaves and resolves the cruciform DNA. The polypeptide is Holliday junction branch migration complex subunit RuvA (Dehalococcoides mccartyi (strain CBDB1)).